A 67-amino-acid chain; its full sequence is Conotoxin reg3.8 (67 aa).

Positions 1–22 are cleaved as a signal peptide; sequence MMSKLGVLLTICLLLFPLSVLP. Residues 23–50 constitute a propeptide that is removed on maturation; that stretch reads LDGDQLADQPARHAQSAERNARFHPVKR. Disulfide bonds link Cys51/Cys65, Cys52/Cys63, and Cys57/Cys66. Cys66 bears the Cysteine amide mark.

Belongs to the conotoxin M superfamily. In terms of tissue distribution, expressed by the venom duct.

It localises to the secreted. The protein is Conotoxin reg3.8 of Conus regius (Crown cone).